Reading from the N-terminus, the 360-residue chain is UDP-N-acetylglucosamine--N-acetylmuramyl-(pentapeptide) pyrophosphoryl-undecaprenol N-acetylglucosamine transferase (360 aa).

UDP-N-acetyl-alpha-D-glucosamine contacts are provided by residues 16 to 18 (TGG), N128, R165, S191, I247, 266 to 271 (ALTVSE), and Q292.

It belongs to the glycosyltransferase 28 family. MurG subfamily.

It localises to the cell inner membrane. It catalyses the reaction di-trans,octa-cis-undecaprenyl diphospho-N-acetyl-alpha-D-muramoyl-L-alanyl-D-glutamyl-meso-2,6-diaminopimeloyl-D-alanyl-D-alanine + UDP-N-acetyl-alpha-D-glucosamine = di-trans,octa-cis-undecaprenyl diphospho-[N-acetyl-alpha-D-glucosaminyl-(1-&gt;4)]-N-acetyl-alpha-D-muramoyl-L-alanyl-D-glutamyl-meso-2,6-diaminopimeloyl-D-alanyl-D-alanine + UDP + H(+). It functions in the pathway cell wall biogenesis; peptidoglycan biosynthesis. Cell wall formation. Catalyzes the transfer of a GlcNAc subunit on undecaprenyl-pyrophosphoryl-MurNAc-pentapeptide (lipid intermediate I) to form undecaprenyl-pyrophosphoryl-MurNAc-(pentapeptide)GlcNAc (lipid intermediate II). The chain is UDP-N-acetylglucosamine--N-acetylmuramyl-(pentapeptide) pyrophosphoryl-undecaprenol N-acetylglucosamine transferase from Shewanella amazonensis (strain ATCC BAA-1098 / SB2B).